The sequence spans 427 residues: Peptidase B (427 aa).

Lys195 and Asp200 together coordinate Mn(2+). Lys207 is an active-site residue. Mn(2+)-binding residues include Asp218, Asp277, and Glu279. Arg281 is an active-site residue.

It belongs to the peptidase M17 family. In terms of assembly, homohexamer. Mn(2+) serves as cofactor.

The protein localises to the cytoplasm. The catalysed reaction is Release of an N-terminal amino acid, Xaa, from a peptide or arylamide. Xaa is preferably Glu or Asp but may be other amino acids, including Leu, Met, His, Cys and Gln.. Functionally, probably plays an important role in intracellular peptide degradation. This is Peptidase B from Escherichia coli O139:H28 (strain E24377A / ETEC).